Reading from the N-terminus, the 471-residue chain is MASKTFDAGVQDYQLTYWTPDYTPLDTDLLACFKVVPQEGVPREEAAAAVAAESSTGTWTTVWTDLLTDMEFFKGRAYRIEDVPGDKNAFYAFIAYPLDLFEEGSVVNVLTSLVGNVFGFKAVRSLRLEDLRFPIAFIKTCGGPPSGIQVERDKLNKYGRPMLGCTIKPKLGLSAKNYGRAVYECLRGGLDLTKDDENINSQPFQRWRDRFEFVAEAVDKATAETGERKGHYLNVTAGTVEEMMKRAEFAKELGQPIIMHDFLTAGFTANTTLANWCRENGMLLHIHRAMHAVIDRNPLHGIHFRVLAKCLRLSGGDHLHTGTVVGKLEGDRASTLGFVDQLRESFVPEDRSRGVFFDQDWGSMPGVMAVASGGIHVWHMPALVNIFGDDSVLQFGGGTQGHPGGNAAGAAANRVALEACVKARNEGRDLEREGGDILREAARTSKELAVALETWKEIKFEFDTVDKLDVQ.

Residues asparagine 116 and threonine 166 each coordinate substrate. Lysine 168 functions as the Proton acceptor in the catalytic mechanism. Lysine 170 provides a ligand contact to substrate. Residues lysine 194, aspartate 196, and glutamate 197 each contribute to the Mg(2+) site. Lysine 194 carries the post-translational modification N6-carboxylysine. Histidine 287 serves as the catalytic Proton acceptor. Residues arginine 288, histidine 320, and serine 372 each contribute to the substrate site.

It belongs to the RuBisCO large chain family. Type I subfamily. As to quaternary structure, heterohexadecamer of 8 large chains and 8 small chains. The cofactor is Mg(2+).

Its subcellular location is the carboxysome. It catalyses the reaction 2 (2R)-3-phosphoglycerate + 2 H(+) = D-ribulose 1,5-bisphosphate + CO2 + H2O. The enzyme catalyses D-ribulose 1,5-bisphosphate + O2 = 2-phosphoglycolate + (2R)-3-phosphoglycerate + 2 H(+). In terms of biological role, ruBisCO catalyzes two reactions: the carboxylation of D-ribulose 1,5-bisphosphate, the primary event in carbon dioxide fixation, as well as the oxidative fragmentation of the pentose substrate. Both reactions occur simultaneously and in competition at the same active site. The polypeptide is Ribulose bisphosphate carboxylase large chain 2 (Hydrogenovibrio marinus).